We begin with the raw amino-acid sequence, 520 residues long: MSESGHSQPGLYGIERRRRWKEPGPGGPQNLSGPGGRERDYIAPWERERRDGSEETSTAVMQKTPIILSKPPAERSKQPPPPAAPAAPPAPAPLEKPIVLMKPREEGKGPAATTSTSTPEGTAPPPPAAPVPPKGEKEGQRPTQPVYQIQNRGMGTAAPAAMDPVVGQAKLLPPERMKHSIKLVDDQMNWCDSAIEYLLDQTDVLVVGVLGLQGTGKSMVMSLLSANTPEEDQRAYVFRAQSAEMKERGGNQTSGIDFFITQERIVFLDTQPILSPSILDHLINNDRKLPPEYNLPHTYVEMQSLQIAAFLFTVCHVVIVVQDWFTDLSLYRFLQTAEMVKPSTPSPSHESSSSSGSEEGAEYYPHLVFLQNKARREDFCPRKLRQMHLMIDQLMAHSHLRYKGTLSMLQCNVFPGLPPDFLDSEVNLFLMPFMDSETESETPPRAGPGSSPLFSLLPGYRGHPSFQSLVSKLRSQVMSMARPQLSHTILTEKNWFHYAARIWDGVKKSSALAEYSRLLA.

The segment at 1 to 143 (MSESGHSQPG…KGEKEGQRPT (143 aa)) is disordered. S2 is subject to N-acetylserine. Phosphoserine occurs at positions 2, 4, 7, 32, and 53. Residues 36–53 (GRERDYIAPWERERRDGS) show a composition bias toward basic and acidic residues. Residues 78–94 (QPPPPAAPAAPPAPAPL) are compositionally biased toward pro residues. Residues 109–121 (GPAATTSTSTPEG) show a composition bias toward low complexity. The segment covering 122–133 (TAPPPPAAPVPP) has biased composition (pro residues). The residue at position 451 (S451) is a Phosphoserine.

Belongs to the SMG9 family. In terms of assembly, self-associates to form homodimers and forms heterodimers with SMG8; these assembly forms may represent SMG1C intermediate forms. Component of the SMG1C complex composed of SMG1, SMG8 and SMG9. Self-associates to form homodimers and forms heterodimers with SMG8; these assembly forms may represent SMG1C intermediate forms. Interacts with DHX34; the interaction is RNA-independent. Post-translationally, phosphorylated by SMG1.

In terms of biological role, involved in nonsense-mediated decay (NMD) of mRNAs containing premature stop codons. Is recruited by release factors to stalled ribosomes together with SMG1 and SMG8 (forming the SMG1C protein kinase complex) and, in the SMG1C complex, is required for the efficient association between SMG1 and SMG8. Plays a role in brain, heart, and eye development. The protein is Nonsense-mediated mRNA decay factor SMG9 of Bos taurus (Bovine).